We begin with the raw amino-acid sequence, 252 residues long: Probable transcriptional regulator SauR (252 aa).

The HTH iclR-type domain maps to 6 to 68 (NAAAVRAFRI…AGNRHYECSS (63 aa)). Residues 28-47 (LAAIVQAIELPKQTVHRILK) constitute a DNA-binding region (H-T-H motif). An IclR-ED domain is found at 83 to 252 (PAAARHAILQ…ADEMVKTFCE (170 aa)).

May regulate transcription of the sauSTU operon. This is Probable transcriptional regulator SauR (sauR) from Cupriavidus necator (strain ATCC 17699 / DSM 428 / KCTC 22496 / NCIMB 10442 / H16 / Stanier 337) (Ralstonia eutropha).